We begin with the raw amino-acid sequence, 1565 residues long: Structure-specific endonuclease subunit SLX4 (1565 aa).

The segment at 1 to 87 (MVPESAPNGN…ENEYKLDATD (87 aa)) is disordered. Residues 7 to 24 (PNGNSQPLPSCFTTTGVP) are compositionally biased toward polar residues. Basic and acidic residues predominate over residues 43–58 (KRADPERLRHASEESP). Ser-111 carries the phosphoserine modification. Lys-115 participates in a covalent cross-link: Glycyl lysine isopeptide (Lys-Gly) (interchain with G-Cter in SUMO2). 2 consecutive UBZ4-type zinc fingers follow at residues 117-147 (LFFC…DEAE) and 157-185 (IPDC…VRME). Positions 120, 123, 138, 142, 160, and 163 each coordinate Zn(2+). Lys-171 participates in a covalent cross-link: Glycyl lysine isopeptide (Lys-Gly) (interchain with G-Cter in SUMO2). Residues His-176 and Cys-180 each contribute to the Zn(2+) site. Disordered regions lie at residues 203–242 (EVDG…PEAP), 279–305 (GAEK…ETTG), and 387–418 (EPQL…SHSP). Over residues 220–236 (LKRKGVTTKREPRRRKV) the composition is skewed to basic residues. Lys-283 participates in a covalent cross-link: Glycyl lysine isopeptide (Lys-Gly) (interchain with G-Cter in SUMO2). Residues 296-305 (LVTQDSETTG) show a composition bias toward polar residues. Residues 499–1565 (MVNNPHLSDV…PSGRKKKDQK (1067 aa)) are interaction with PLK1 and TERF2-TERF2IP. The BTB domain maps to 506-579 (SDVQFQLDSG…LYMADTDMPP (74 aa)). Lys-649 is covalently cross-linked (Glycyl lysine isopeptide (Lys-Gly) (interchain with G-Cter in SUMO2)). Disordered regions lie at residues 683-769 (RAAD…DPSF), 789-848 (GCKQ…SPSQ), 861-943 (PSVS…SPRA), 963-989 (DEEL…EFSP), 1063-1099 (PGVS…PNLE), 1128-1212 (GRQA…MGDY), and 1249-1337 (SDDC…ITPM). Basic and acidic residues predominate over residues 715 to 730 (ENTEHMESSGLEKEEA). Residues 798 to 808 (PRVSSELSQIT) show a composition bias toward polar residues. Positions 809-822 (VDHEEQSDHVRETQ) are enriched in basic and acidic residues. Low complexity-rich tracts occupy residues 833–848 (SCSL…SPSQ) and 861–875 (PSVS…RVAS). 2 positions are modified to phosphoserine: Ser-845 and Ser-875. Polar residues predominate over residues 877-894 (RSLSPTTPTKQRRGSNIV). Glycyl lysine isopeptide (Lys-Gly) (interchain with G-Cter in SUMO2) cross-links involve residues Lys-886, Lys-898, and Lys-925. Residues Ser-926 and Ser-940 each carry the phosphoserine modification. Positions 967–985 (EHTKTESVSKDSPEGRKVP) are enriched in basic and acidic residues. Lys-983 is covalently cross-linked (Glycyl lysine isopeptide (Lys-Gly) (interchain with G-Cter in SUMO2)). Ser-988 is modified (phosphoserine). The interval 1120–1413 (ITLGAFDSGR…TTETCNPSRL (294 aa)) is interaction with MUS81. Positions 1179–1189 (DVVEVGDSDDE) are enriched in acidic residues. 2 positions are modified to phosphoserine: Ser-1249 and Ser-1254. A compositionally biased stretch (acidic residues) spans 1285-1295 (LWDDWNEEEGQ). Glycyl lysine isopeptide (Lys-Gly) (interchain with G-Cter in SUMO2) cross-links involve residues Lys-1349 and Lys-1350. Disordered stretches follow at residues 1381–1449 (ESDS…SSKS) and 1546–1565 (KEKL…KDQK). At Ser-1384 the chain carries Phosphoserine. The segment covering 1401-1412 (QASTTETCNPSR) has biased composition (polar residues). Residues 1406 to 1565 (ETCNPSRLPT…PSGRKKKDQK (160 aa)) form an interaction with SLX1 region. Over residues 1437 to 1449 (SVDGSDNSFSSKS) the composition is skewed to low complexity. The segment covering 1547–1565 (EKLKHKRRQPSGRKKKDQK) has biased composition (basic residues).

Belongs to the SLX4 family. As to quaternary structure, forms a heterodimer with SLX1A/GIYD1. Interacts with ERCC4/XPF; catalytic subunit of the ERCC4-ERCC1 endonuclease. Interacts with MUS81; catalytic subunit of the MUS81-EME1 endonuclease. Interacts with MSH2; component of the MSH2-MSH3 mismatch repair complex. Interacts with TERF2-TERF2IP. Interacts with PLK1 and SLX4IP. Highly expressed in testis. Expressed in bone marrow, brain, thymus and weakly in heart, kidney and spleen.

It localises to the nucleus. Its function is as follows. Regulatory subunit that interacts with and increases the activity of different structure-specific endonucleases. Has several distinct roles in protecting genome stability by resolving diverse forms of deleterious DNA structures originating from replication and recombination intermediates and from DNA damage. Component of the SLX1-SLX4 structure-specific endonuclease that resolves DNA secondary structures generated during DNA repair and recombination. Has endonuclease activity towards branched DNA substrates, introducing single-strand cuts in duplex DNA close to junctions with ss-DNA. Has a preference for 5'-flap structures, and promotes symmetrical cleavage of static and migrating Holliday junctions (HJs). Resolves HJs by generating two pairs of ligatable, nicked duplex products. Interacts with the structure-specific ERCC4-ERCC1 endonuclease and promotes the cleavage of bubble structures. Interacts with the structure-specific MUS81-EME1 endonuclease and promotes the cleavage of 3'-flap and replication fork-like structures. SLX4 is required for recovery from alkylation-induced DNA damage and is involved in the resolution of DNA double-strand breaks. The chain is Structure-specific endonuclease subunit SLX4 (Slx4) from Mus musculus (Mouse).